The sequence spans 673 residues: Probable lysophospholipase 4 (673 aa).

The signal sequence occupies residues 1-19; it reads MYVNYIGLFAFVQISLTLA. N72, N125, N191, N194, N272, N301, N374, N404, N409, N481, N516, N545, and N574 each carry an N-linked (GlcNAc...) asparagine glycan. One can recognise a PLA2c domain in the interval 74–615; it reads TCSNDNLLRP…QEYCWDGTLA (542 aa). Residues 631-653 are disordered; the sequence is TTSRAPSGTTSGTASSTTSSSVA.

This sequence belongs to the lysophospholipase family.

The protein localises to the secreted. It carries out the reaction a 1-acyl-sn-glycero-3-phosphocholine + H2O = sn-glycerol 3-phosphocholine + a fatty acid + H(+). Functionally, catalyzes the release of fatty acids from lysophospholipids. In Schizosaccharomyces pombe (strain 972 / ATCC 24843) (Fission yeast), this protein is Probable lysophospholipase 4 (plb4).